Here is a 100-residue protein sequence, read N- to C-terminus: NAD(P)H-quinone oxidoreductase subunit 4L, chloroplastic (100 aa).

The next 3 membrane-spanning stretches (helical) occupy residues 1 to 21, 29 to 49, and 63 to 83; these read MIEN…YGLI, ALMC…TFSN, and ISVI…ILII.

Belongs to the complex I subunit 4L family. As to quaternary structure, NDH is composed of at least 16 different subunits, 5 of which are encoded in the nucleus.

The protein localises to the plastid. It localises to the chloroplast thylakoid membrane. The enzyme catalyses a plastoquinone + NADH + (n+1) H(+)(in) = a plastoquinol + NAD(+) + n H(+)(out). It carries out the reaction a plastoquinone + NADPH + (n+1) H(+)(in) = a plastoquinol + NADP(+) + n H(+)(out). Its function is as follows. NDH shuttles electrons from NAD(P)H:plastoquinone, via FMN and iron-sulfur (Fe-S) centers, to quinones in the photosynthetic chain and possibly in a chloroplast respiratory chain. The immediate electron acceptor for the enzyme in this species is believed to be plastoquinone. Couples the redox reaction to proton translocation, and thus conserves the redox energy in a proton gradient. This Angiopteris evecta (Mule's foot fern) protein is NAD(P)H-quinone oxidoreductase subunit 4L, chloroplastic.